The following is an 87-amino-acid chain: Probable Fe(2+)-trafficking protein (87 aa).

This sequence belongs to the Fe(2+)-trafficking protein family.

In terms of biological role, could be a mediator in iron transactions between iron acquisition and iron-requiring processes, such as synthesis and/or repair of Fe-S clusters in biosynthetic enzymes. The protein is Probable Fe(2+)-trafficking protein of Francisella philomiragia subsp. philomiragia (strain ATCC 25017 / CCUG 19701 / FSC 153 / O#319-036).